The primary structure comprises 405 residues: tRNA-specific 2-thiouridylase MnmA (405 aa).

Residues 41 to 48 (AMSGGVDS) and leucine 67 each bind ATP. The active-site Nucleophile is the cysteine 135. A disulfide bond links cysteine 135 and cysteine 231. Glycine 159 contributes to the ATP binding site. Positions 181-183 (KDQ) are interaction with tRNA. Cysteine 231 (cysteine persulfide intermediate) is an active-site residue.

The protein belongs to the MnmA/TRMU family.

The protein resides in the cytoplasm. It carries out the reaction S-sulfanyl-L-cysteinyl-[protein] + uridine(34) in tRNA + AH2 + ATP = 2-thiouridine(34) in tRNA + L-cysteinyl-[protein] + A + AMP + diphosphate + H(+). Functionally, catalyzes the 2-thiolation of uridine at the wobble position (U34) of tRNA, leading to the formation of s(2)U34. This is tRNA-specific 2-thiouridylase MnmA from Maricaulis maris (strain MCS10) (Caulobacter maris).